Reading from the N-terminus, the 294-residue chain is MNFQDVILTLQNFWARRGCAIQQPFDSECGAGTFNPATFLRVIGPEPWNVAYVEPSRRPTDGRYGENPNRLQHYFQFQVILKPSPDNVQEIYIDSLRALGINPAEHDIRFVEDDWESPTLGAWGLGWEVWLNGMEVTQFTYFQQVGGIDLSPTSVEITYGLERLCMYLQEKESVYDLMWNDTVTYGHIYHRNEVEMSRYNFEESDAGMLLELFNAYERECTRLCEKQLLWPAYDYCLKCSHTFNLLDARGAISITERTGYIGRVRVLASSVARLYAAQREEMGYPMLNTGIRKG.

It belongs to the class-II aminoacyl-tRNA synthetase family. Tetramer of two alpha and two beta subunits.

It is found in the cytoplasm. It carries out the reaction tRNA(Gly) + glycine + ATP = glycyl-tRNA(Gly) + AMP + diphosphate. This Oleidesulfovibrio alaskensis (strain ATCC BAA-1058 / DSM 17464 / G20) (Desulfovibrio alaskensis) protein is Glycine--tRNA ligase alpha subunit.